We begin with the raw amino-acid sequence, 249 residues long: MKQSIIIPALDLINGQVVRLHQGDYAKQTTYSDNPIKQFDNYVRQGAKQLHLVDLTGAKNPQSRQTALIGKIVEATQCKVQVGGGIRTEQDVADLLAVGANRVVIGSTAVTHRSMVKNWFIKYGAEKFVLALDVNINASGQKIVAISGWQEESGVLLETLIEDFQTVGLQQVLCTDISRDGTLTGSNIGLYQEICEKYPPIQFQSSGGIGSLADIEALKGTGVSGVIVGRALLEGKFTLSEAIKCWQNG.

The Proton acceptor role is filled by Asp11. The active-site Proton donor is the Asp133.

Belongs to the HisA/HisF family.

It is found in the cytoplasm. It catalyses the reaction 1-(5-phospho-beta-D-ribosyl)-5-[(5-phospho-beta-D-ribosylamino)methylideneamino]imidazole-4-carboxamide = 5-[(5-phospho-1-deoxy-D-ribulos-1-ylimino)methylamino]-1-(5-phospho-beta-D-ribosyl)imidazole-4-carboxamide. It functions in the pathway amino-acid biosynthesis; L-histidine biosynthesis; L-histidine from 5-phospho-alpha-D-ribose 1-diphosphate: step 4/9. In Haemophilus influenzae (strain 86-028NP), this protein is 1-(5-phosphoribosyl)-5-[(5-phosphoribosylamino)methylideneamino] imidazole-4-carboxamide isomerase.